We begin with the raw amino-acid sequence, 243 residues long: Ubiquinone/menaquinone biosynthesis C-methyltransferase UbiE (243 aa).

S-adenosyl-L-methionine is bound by residues Thr69, Asp90, and 116–117 (DA).

This sequence belongs to the class I-like SAM-binding methyltransferase superfamily. MenG/UbiE family.

The enzyme catalyses a 2-demethylmenaquinol + S-adenosyl-L-methionine = a menaquinol + S-adenosyl-L-homocysteine + H(+). It catalyses the reaction a 2-methoxy-6-(all-trans-polyprenyl)benzene-1,4-diol + S-adenosyl-L-methionine = a 5-methoxy-2-methyl-3-(all-trans-polyprenyl)benzene-1,4-diol + S-adenosyl-L-homocysteine + H(+). The protein operates within quinol/quinone metabolism; menaquinone biosynthesis; menaquinol from 1,4-dihydroxy-2-naphthoate: step 2/2. Its pathway is cofactor biosynthesis; ubiquinone biosynthesis. Its function is as follows. Methyltransferase required for the conversion of demethylmenaquinol (DMKH2) to menaquinol (MKH2) and the conversion of 2-polyprenyl-6-methoxy-1,4-benzoquinol (DDMQH2) to 2-polyprenyl-3-methyl-6-methoxy-1,4-benzoquinol (DMQH2). The polypeptide is Ubiquinone/menaquinone biosynthesis C-methyltransferase UbiE (Burkholderia cenocepacia (strain HI2424)).